Reading from the N-terminus, the 242-residue chain is ATP synthase subunit a (242 aa).

Helical transmembrane passes span 29–49 (SSIY…LAFY), 84–104 (FIPL…LGMT), 114–134 (IIVT…VGFI), 140–160 (FLTL…MIVI), 181–201 (MAGH…MIYL), and 203–223 (FLPI…AILQ).

The protein belongs to the ATPase A chain family. As to quaternary structure, F-type ATPases have 2 components, CF(1) - the catalytic core - and CF(0) - the membrane proton channel. CF(1) has five subunits: alpha(3), beta(3), gamma(1), delta(1), epsilon(1). CF(0) has three main subunits: a(1), b(2) and c(9-12). The alpha and beta chains form an alternating ring which encloses part of the gamma chain. CF(1) is attached to CF(0) by a central stalk formed by the gamma and epsilon chains, while a peripheral stalk is formed by the delta and b chains.

It localises to the cell inner membrane. In terms of biological role, key component of the proton channel; it plays a direct role in the translocation of protons across the membrane. The polypeptide is ATP synthase subunit a (Rickettsia typhi (strain ATCC VR-144 / Wilmington)).